Here is a 433-residue protein sequence, read N- to C-terminus: 26S proteasome regulatory subunit 7 (433 aa).

Residues 1–22 are disordered; that stretch reads MPDYLGADQRKTKEDEKDDKPI. A compositionally biased stretch (basic and acidic residues) spans 8–22; sequence DQRKTKEDEKDDKPI. Position 116 is an N6-acetyllysine (lysine 116). Residue 216–223 coordinates ATP; it reads GPPGTGKT. An N6-acetyllysine modification is found at lysine 422.

This sequence belongs to the AAA ATPase family. Component of the 19S proteasome regulatory particle complex. The 26S proteasome consists of a 20S core particle (CP) and two 19S regulatory subunits (RP). The regulatory particle is made of a lid composed of 9 subunits, a base containing 6 ATPases including PSMC2 and few additional components. Interacts with NDC80 and SQSTM1. Interacts with PAAF1. Interacts with TRIM5. In terms of processing, monoubiquitinated by RNF181. Phosphorylated. Dephosphorylated by UBLCP1 which impairs PSMC2 ATPase activity and disrupts 26S proteasome assembly.

Its subcellular location is the cytoplasm. Component of the 26S proteasome, a multiprotein complex involved in the ATP-dependent degradation of ubiquitinated proteins. This complex plays a key role in the maintenance of protein homeostasis by removing misfolded or damaged proteins, which could impair cellular functions, and by removing proteins whose functions are no longer required. Therefore, the proteasome participates in numerous cellular processes, including cell cycle progression, apoptosis, or DNA damage repair. PSMC2 belongs to the heterohexameric ring of AAA (ATPases associated with diverse cellular activities) proteins that unfolds ubiquitinated target proteins that are concurrently translocated into a proteolytic chamber and degraded into peptides. In Rattus norvegicus (Rat), this protein is 26S proteasome regulatory subunit 7 (Psmc2).